Here is a 314-residue protein sequence, read N- to C-terminus: tRNA dimethylallyltransferase (314 aa).

ATP is bound at residue 12–19 (GPTASGKT). 14–19 (TASGKT) lines the substrate pocket. 2 interaction with substrate tRNA regions span residues 37 to 40 (DSAL) and 162 to 166 (QRIIR).

This sequence belongs to the IPP transferase family. As to quaternary structure, monomer. Requires Mg(2+) as cofactor.

The catalysed reaction is adenosine(37) in tRNA + dimethylallyl diphosphate = N(6)-dimethylallyladenosine(37) in tRNA + diphosphate. Functionally, catalyzes the transfer of a dimethylallyl group onto the adenine at position 37 in tRNAs that read codons beginning with uridine, leading to the formation of N6-(dimethylallyl)adenosine (i(6)A). The chain is tRNA dimethylallyltransferase from Acinetobacter baumannii (strain AB0057).